Reading from the N-terminus, the 597-residue chain is Coronatine-insensitive protein homolog 1b (597 aa).

In terms of domain architecture, F-box spans Ser22–Val64. Residues Arg92, Arg353, Tyr391, Arg414, and Arg501 each coordinate jasmonate.

In terms of assembly, interacts with TIFY10C/JAZ8 in a coronatine-dependent manner. Interacts with TIFY3/JAZ1, TIFY6A/JAZ3, TIFY6B/JAZ4, TIFY10A/JAZ6, TIFY10B/JAZ7, TIFY11A/JAZ9, TIFY11B/JAZ10, TIFY11C/JAZ11 and TIFY11D/JAZ12 in a coronatine-dependent manner. As to expression, expressed in roots, shoots, leaf sheaths and leaf blades.

In terms of biological role, involved in jasmonate (JA) signaling. Required for jasmonate signaling in plant defense responses. Can complement Arabidopsis coi1-1 mutant and restore jasmonate signaling. Component of SCF(COI1) E3 ubiquitin ligase complexes, which may mediate the ubiquitination and subsequent proteasomal degradation of target proteins, including TIFY/JAZ family. The polypeptide is Coronatine-insensitive protein homolog 1b (Oryza sativa subsp. japonica (Rice)).